Consider the following 280-residue polypeptide: MAIRKYKPTTPGRRASSVSMFSEITRSTPEKSLLRPLSKTGGRNSHGHITTRHRGGGHKRRYRVIDFRRNDKDGVLAKVAHIEYDPNRTANIALLHYFDGEKRYIIAPKGLTQGTVVESGANADIKVGNNLPLRNIPTGTTIHNVELKPGAGAKLARSAGSSVQLLGKEGPYAILRMPSTEIRRVDIRCRATVGEVGNADQINIRWGKAGRMRWKGWRPTVRGVVMNPVDHPHGGGEGKTSGGRHPVSPWGQKEGRTRRPKRYSDDMIVRRRRANKNKKR.

Disordered stretches follow at residues 1–20, 29–58, and 225–280; these read MAIR…SVSM, PEKS…GGGH, and VMNP…NKKR. Over residues 45–58 the composition is skewed to basic residues; it reads SHGHITTRHRGGGH. A compositionally biased stretch (basic and acidic residues) spans 253-269; that stretch reads KEGRTRRPKRYSDDMIV. Residues 270–280 are compositionally biased toward basic residues; sequence RRRRANKNKKR.

It belongs to the universal ribosomal protein uL2 family. In terms of assembly, part of the 50S ribosomal subunit. Forms a bridge to the 30S subunit in the 70S ribosome.

Functionally, one of the primary rRNA binding proteins. Required for association of the 30S and 50S subunits to form the 70S ribosome, for tRNA binding and peptide bond formation. It has been suggested to have peptidyltransferase activity; this is somewhat controversial. Makes several contacts with the 16S rRNA in the 70S ribosome. The protein is Large ribosomal subunit protein uL2 of Corynebacterium efficiens (strain DSM 44549 / YS-314 / AJ 12310 / JCM 11189 / NBRC 100395).